We begin with the raw amino-acid sequence, 275 residues long: Large ribosomal subunit protein uL2 (275 aa).

Positions 224 to 257 are disordered; that stretch reads AMNPIDHPHGGGEGRTAAGRDPVSPWGTPTKGFR.

It belongs to the universal ribosomal protein uL2 family. Part of the 50S ribosomal subunit. Forms a bridge to the 30S subunit in the 70S ribosome.

Functionally, one of the primary rRNA binding proteins. Required for association of the 30S and 50S subunits to form the 70S ribosome, for tRNA binding and peptide bond formation. It has been suggested to have peptidyltransferase activity; this is somewhat controversial. Makes several contacts with the 16S rRNA in the 70S ribosome. The sequence is that of Large ribosomal subunit protein uL2 from Burkholderia mallei (strain NCTC 10247).